Here is a 1307-residue protein sequence, read N- to C-terminus: Cyclic nucleotide-gated channel beta-1 (1307 aa).

6 disordered regions span residues 1–101, 126–178, 193–262, 320–458, 470–625, and 648–681; these read MLGW…AQVA, QPVY…TEPS, LPQP…PGDP, DSCW…LDSC, LERA…SQNS, and EKLIDPDVTSDEESPKPSPAKKAPDSAPAQKPAE. The Cytoplasmic portion of the chain corresponds to 1–720; sequence MLGWVQRVLP…SIDPLTNLMY (720 aa). Residues 43–59 are compositionally biased toward acidic residues; sequence VQPEPEPEPEPAPEEAA. Residues 165–174 show a composition bias toward basic and acidic residues; sequence GSDKTSKTQD. Acidic residues predominate over residues 361–386; it reads QEEEEEEKEEKEEKEEEEEKEEEEKR. Residues 387 to 406 show a composition bias toward basic and acidic residues; it reads EEEKKKEKEEEKKEKEKEEK. 2 stretches are compositionally biased toward acidic residues: residues 407–451 and 483–518; these read EEKE…EEEP and LPEEEEEKEEEKKEEEEEKEEEEEKEEEEEKEEEGE. Over residues 550 to 560 the composition is skewed to pro residues; sequence TIPPPERPPVS. Residues 621–631 are calmodulin-binding CaM1; the sequence is ASQNSAIINDR. Residues 721 to 742 traverse the membrane as a helical segment; it reads ILWLFFVVLAWNWNCWLIPVRW. Residues 743 to 751 are Extracellular-facing; the sequence is AFPYQRADN. Residues 752 to 773 form a helical membrane-spanning segment; sequence IHLWLLMDYLCDFIYLLDITVF. Over 774-788 the chain is Cytoplasmic; that stretch reads QMRLQFVKGGDIITD. Residues 789 to 808 traverse the membrane as a helical segment; the sequence is KKEMRNNYLKSQRFKMDLLC. Residues 809-824 lie on the Extracellular side of the membrane; sequence LLPLDFLYLKLGVNPL. Residues 825-837 traverse the membrane as a helical segment; it reads LRLPRCLKYMAFF. Residues 838-849 lie on the Cytoplasmic side of the membrane; sequence EFNNRLEAILSK. Residues 850–872 form a helical membrane-spanning segment; sequence AYVYRVIRTTAYLLYSLHLNSCL. The tract at residues 850–949 is ion conduction pathway; that stretch reads AYVYRVIRTT…IGQMRDVVGA (100 aa). Residues 873-895 are Extracellular-facing; it reads YYWASAFQGIGSTHWVYDGVGNS. A run of 2 helical transmembrane segments spans residues 896–922 and 923–948; these read YIRCYYWAVKTLITIGGLPDPQTLFEI and VFQLLNYFTGVFAFSVMIGQMRDVVG. Residues 949–1307 are Cytoplasmic-facing; that stretch reads AATAGQTYYR…MLEEKKEEVE (359 aa). The tract at residues 952–1028 is C-linker; that stretch reads AGQTYYRSCM…NIVSKVALFQ (77 aa). A cNMP-binding domain region spans residues 1026 to 1130; the sequence is LFQGCDRQMI…LDKKDLNEIL (105 aa). The tract at residues 1032–1148 is cyclic nucleotide-binding domain; the sequence is RQMIFDMLKR…LLRKKARRML (117 aa). Glycine 1093, glutamate 1094, serine 1096, arginine 1106, and threonine 1107 together coordinate 3',5'-cyclic GMP. Arginine 1106 serves as a coordination point for 3',5'-cyclic AMP. The calmodulin-binding CaM2 stretch occupies residues 1212–1218; that stretch reads QQQLLEQ. Over residues 1214–1238 the composition is skewed to low complexity; it reads QLLEQAKSSQEAGGEEGSGATDQPA. The interval 1214-1307 is disordered; the sequence is QLLEQAKSSQ…MLEEKKEEVE (94 aa). Pro residues predominate over residues 1250 to 1261; that stretch reads EPPAPSSPPPAS.

This sequence belongs to the cyclic nucleotide-gated cation channel (TC 1.A.1.5) family. CNGB1 subfamily. In terms of assembly, the rod cyclic nucleotide-gated channel is a heterotetramer composed of CNGA1 and CNGB1 subunits with 3:1 stoichiometry. CNGA1:CNGB1 channel binds Ca(2+)-bound CALM1 via CaM1 and CaM2 regions of the CNGB1 subunit; this interaction modulates the affinity of the channel for cNMPs in response to intracellular Ca(2+) levels. The olfactory cyclic nucleotide-gated channel is a heterotetramer composed of CNGA2, CNGA4 and CNGB1b subunits with 2:1:1 stoichiometry. Expressed in olfactory sensory cilia (at protein level).

It localises to the cell projection. The protein localises to the cilium membrane. It catalyses the reaction Ca(2+)(in) = Ca(2+)(out). The catalysed reaction is Na(+)(in) = Na(+)(out). It carries out the reaction K(+)(in) = K(+)(out). The enzyme catalyses NH4(+)(in) = NH4(+)(out). It catalyses the reaction Rb(+)(in) = Rb(+)(out). The catalysed reaction is Li(+)(in) = Li(+)(out). It carries out the reaction Cs(+)(in) = Cs(+)(out). Functionally, pore-forming subunit of the rod cyclic nucleotide-gated channel. Mediates rod photoresponses at dim light converting transient changes in intracellular cGMP levels into electrical signals. In the dark, cGMP levels are high and keep the channel open enabling a steady inward current carried by Na(+) and Ca(2+) ions that leads to membrane depolarization and neurotransmitter release from synaptic terminals. Upon photon absorption cGMP levels decline leading to channel closure and membrane hyperpolarization that ultimately slows neurotransmitter release and signals the presence of light, the end point of the phototransduction cascade. Conducts cGMP- and cAMP-gated ion currents, with permeability for monovalent and divalent cations. The selectivity for Ca(2+) over Na(+) increases with cGMP concentrations, whereas the selectivity among monovalent ions is independent of the cGMP levels. Pore-forming subunit of the olfactory cyclic nucleotide-gated channel. Operates in the cilia of olfactory sensory neurons where chemical stimulation of the odorant is converted to an electrical signal. Mediates odorant-induced cAMP-dependent Ca(2+) influx triggering neuron depolarization. The rise of intracellular Ca(2+) levels potentiates the olfactory response by activating Ca(2+)-dependent Cl(-) channels, but it also serves as a negative feedback signal to desensitize the channel for rapid adaptation to odorants. The polypeptide is Cyclic nucleotide-gated channel beta-1 (Rattus norvegicus (Rat)).